The following is a 78-amino-acid chain: MVKEEKQENRGSVEFQVFSFTNKIRRLASHLELHKKDFSSERGLRRLLGKRQRLLAYLAKKNRVRYKKLISQLDIREK.

Belongs to the universal ribosomal protein uS15 family. As to quaternary structure, part of the 30S ribosomal subunit.

It localises to the plastid. Its subcellular location is the chloroplast. The chain is Small ribosomal subunit protein uS15c (rps15-A) from Saccharum officinarum (Sugarcane).